Reading from the N-terminus, the 149-residue chain is Large ribosomal subunit protein bL9 (149 aa).

Belongs to the bacterial ribosomal protein bL9 family.

Its function is as follows. Binds to the 23S rRNA. This chain is Large ribosomal subunit protein bL9, found in Thermotoga maritima (strain ATCC 43589 / DSM 3109 / JCM 10099 / NBRC 100826 / MSB8).